Reading from the N-terminus, the 180-residue chain is Adenine phosphoribosyltransferase (180 aa).

The protein belongs to the purine/pyrimidine phosphoribosyltransferase family. Homodimer.

Its subcellular location is the cytoplasm. The enzyme catalyses AMP + diphosphate = 5-phospho-alpha-D-ribose 1-diphosphate + adenine. It participates in purine metabolism; AMP biosynthesis via salvage pathway; AMP from adenine: step 1/1. Catalyzes a salvage reaction resulting in the formation of AMP, that is energically less costly than de novo synthesis. The protein is Adenine phosphoribosyltransferase of Actinobacillus succinogenes (strain ATCC 55618 / DSM 22257 / CCUG 43843 / 130Z).